Here is a 961-residue protein sequence, read N- to C-terminus: FYVE, RhoGEF and PH domain-containing protein 1 (961 aa).

Residues 1–11 (MHGHRAPGGAG) show a composition bias toward gly residues. The segment at 1–353 (MHGHRAPGGA…DEEEEEEKDR (353 aa)) is disordered. Positions 27 to 38 (PPACADSDPGAS) are enriched in low complexity. S48 carries the phosphoserine modification. The segment covering 125 to 135 (PHPEGPQRLRS) has biased composition (basic and acidic residues). 2 stretches are compositionally biased toward pro residues: residues 156-165 (GPKPQVPPKP) and 172-190 (RMPP…PLPA). Residues 171–187 (PRMPPPLEPIPPPPSRP) carry the SH3-binding motif. Positions 199–213 (APRAEASPSSAAVSS) are enriched in low complexity. S205 carries the phosphoserine modification. The span at 231-255 (VPGPSPGPPEPVMLPQPTSQPPVPQ) shows a compositional bias: pro residues. A compositionally biased stretch (basic and acidic residues) spans 273–284 (RDGEKVPNRDSG). Low complexity-rich tracts occupy residues 285–294 (IDSISSPSNS) and 316–325 (ALASVPVALA). A compositionally biased stretch (acidic residues) spans 335 to 351 (VDSDLEEEDDEEEEEEK). Residues 373 to 561 (KVFHIANELL…ATAAEHSNAA (189 aa)) enclose the DH domain. The PH 1 domain occupies 590 to 689 (ELIKEGHILK…WVQAINSTLL (100 aa)). The segment at 702–726 (NSTNREDEDTPPNSPNVDLGKRAPT) is disordered. Phosphothreonine is present on T711. At S715 the chain carries Phosphoserine. The FYVE-type zinc finger occupies 730–790 (EKEVTMCMRC…VCTDCYVALH (61 aa)). C736, C739, C753, C756, C761, C764, C782, and C785 together coordinate Zn(2+). The PH 2 domain occupies 821-921 (NSVICSFLHY…WMAVLGRAGR (101 aa)). Positions 925–961 (FCPGPTLSEDREMEEAPVAALGATAEPPESPQTRDKT) are disordered.

Interacts with DBNL/ABP1 and CTTN. May interact with CCPG1. Binds CDC42. In terms of tissue distribution, expressed in fetal heart, brain, lung, kidney and placenta. Less expressed in liver; adult heart, brain, lung, pancreas and skeletal muscle.

It localises to the cytoplasm. Its subcellular location is the cell projection. It is found in the lamellipodium. The protein resides in the ruffle. The protein localises to the cytoskeleton. Activates CDC42, a member of the Ras-like family of Rho- and Rac proteins, by exchanging bound GDP for free GTP. Plays a role in regulating the actin cytoskeleton and cell shape. The polypeptide is FYVE, RhoGEF and PH domain-containing protein 1 (FGD1) (Homo sapiens (Human)).